The sequence spans 180 residues: SAGA-associated factor 11 homolog (180 aa).

The segment at cysteine 98–cysteine 119 adopts an SGF11-type zinc-finger fold. A disordered region spans residues arginine 138–serine 180. Residues alanine 146–tryptophan 156 are compositionally biased toward acidic residues.

This sequence belongs to the SGF11 family. As to quaternary structure, component of some SAGA transcription coactivator-HAT complexes. Within the SAGA complex, participates in a subcomplex of SAGA called the DUB module (deubiquitination module).

The protein localises to the nucleus. Component of the transcription regulatory histone acetylation (HAT) complex SAGA, a multiprotein complex that activates transcription by remodeling chromatin and mediating histone acetylation and deubiquitination. Within the SAGA complex, participates in a subcomplex that specifically deubiquitinates histone H2B. The SAGA complex is recruited to specific gene promoters by activators, where it is required for transcription. The polypeptide is SAGA-associated factor 11 homolog (Aedes aegypti (Yellowfever mosquito)).